Reading from the N-terminus, the 161-residue chain is Nucleotide-binding protein Pnec_0318 (161 aa).

It belongs to the YajQ family.

Nucleotide-binding protein. This Polynucleobacter necessarius subsp. necessarius (strain STIR1) protein is Nucleotide-binding protein Pnec_0318.